We begin with the raw amino-acid sequence, 352 residues long: Pre-rRNA-processing protein ipi1 (352 aa).

This sequence belongs to the IPI1/TEX10 family. Component of the RIX1 complex, composed of rrm-9/ipi1, rix1/ipi2 and ipi3 in a 1:2:2 stoichiometry. The complex interacts (via rix1) with mdn1 (via its hexameric AAA ATPase ring) and the pre-60S ribosome particles.

It localises to the nucleus. Its function is as follows. Component of the RIX1 complex required for processing of ITS2 sequences from 35S pre-rRNA. The chain is Pre-rRNA-processing protein ipi1 (rrm-9) from Neurospora crassa (strain ATCC 24698 / 74-OR23-1A / CBS 708.71 / DSM 1257 / FGSC 987).